The sequence spans 457 residues: UDP-glycosyltransferase 708C2 (457 aa).

Histidine 32 functions as the Proton acceptor in the catalytic mechanism. Histidine 32 serves as a coordination point for an anthocyanidin. The Charge relay role is filled by aspartate 129. Threonine 150 contributes to the UDP-alpha-D-glucose binding site. The tract at residues 279-280 is UDP; that stretch reads NR. Valine 341, glutamine 343, histidine 358, tryptophan 361, asparagine 362, serine 363, and glutamate 366 together coordinate UDP-alpha-D-glucose. Glycine 381 is a binding site for an anthocyanidin. UDP-alpha-D-glucose is bound by residues aspartate 382 and glutamine 383.

It belongs to the UDP-glycosyltransferase family. Expressed in cotyledons. Not detected in flowers, leaves, roots and hypocotyls.

The enzyme catalyses a 3'-hydro-2'-hydroxy-beta-oxodihydrochalcone + UDP-alpha-D-glucose = a 3'-(beta-D-glucopyranosyl)-2'-hydroxy-beta-oxodihydrochalcone + UDP + H(+). UDP-glucose-dependent glucosyltransferase catalyzing the c-glucosylation of 2-hydroxyflavanones (2-hydroxynaringenin, 2-hydroxyeriodictyol and 2-hydroxypinocembrin) and phloretin. No activity with flavanones, flavones or flavonols. This Fagopyrum esculentum (Common buckwheat) protein is UDP-glycosyltransferase 708C2.